A 148-amino-acid polypeptide reads, in one-letter code: ATP synthase epsilon chain (148 aa).

This sequence belongs to the ATPase epsilon chain family. In terms of assembly, F-type ATPases have 2 components, CF(1) - the catalytic core - and CF(0) - the membrane proton channel. CF(1) has five subunits: alpha(3), beta(3), gamma(1), delta(1), epsilon(1). CF(0) has three main subunits: a, b and c.

The protein localises to the cell membrane. Functionally, produces ATP from ADP in the presence of a proton gradient across the membrane. The polypeptide is ATP synthase epsilon chain (Streptococcus thermophilus (strain ATCC BAA-250 / LMG 18311)).